We begin with the raw amino-acid sequence, 159 residues long: Transcription elongation factor GreA (159 aa).

Residues 14–76 adopt a coiled-coil conformation; the sequence is IKKLENELEY…QLENMLKNAS (63 aa).

It belongs to the GreA/GreB family.

Functionally, necessary for efficient RNA polymerase transcription elongation past template-encoded arresting sites. The arresting sites in DNA have the property of trapping a certain fraction of elongating RNA polymerases that pass through, resulting in locked ternary complexes. Cleavage of the nascent transcript by cleavage factors such as GreA or GreB allows the resumption of elongation from the new 3'terminus. GreA releases sequences of 2 to 3 nucleotides. The chain is Transcription elongation factor GreA from Clostridium kluyveri (strain NBRC 12016).